Here is a 185-residue protein sequence, read N- to C-terminus: Elongation factor P (185 aa).

It belongs to the elongation factor P family.

It localises to the cytoplasm. Its pathway is protein biosynthesis; polypeptide chain elongation. Involved in peptide bond synthesis. Stimulates efficient translation and peptide-bond synthesis on native or reconstituted 70S ribosomes in vitro. Probably functions indirectly by altering the affinity of the ribosome for aminoacyl-tRNA, thus increasing their reactivity as acceptors for peptidyl transferase. The sequence is that of Elongation factor P from Deinococcus deserti (strain DSM 17065 / CIP 109153 / LMG 22923 / VCD115).